A 407-amino-acid polypeptide reads, in one-letter code: Peptidase T (407 aa).

H82 serves as a coordination point for Zn(2+). D84 is an active-site residue. D143 serves as a coordination point for Zn(2+). E177 (proton acceptor) is an active-site residue. Zn(2+) contacts are provided by E178, D200, and H382.

The protein belongs to the peptidase M20B family. Zn(2+) serves as cofactor.

It is found in the cytoplasm. It catalyses the reaction Release of the N-terminal residue from a tripeptide.. Cleaves the N-terminal amino acid of tripeptides. The protein is Peptidase T of Streptococcus thermophilus (strain CNRZ 1066).